A 403-amino-acid polypeptide reads, in one-letter code: Argininosuccinate synthase (403 aa).

ATP contacts are provided by residues 12–20 (AYSGGLDTS) and alanine 39. Tyrosine 91 contributes to the L-citrulline binding site. Residue glycine 121 coordinates ATP. Residues threonine 123, asparagine 127, and aspartate 128 each coordinate L-aspartate. Asparagine 127 is a binding site for L-citrulline. Positions 131, 180, 189, 265, and 277 each coordinate L-citrulline.

It belongs to the argininosuccinate synthase family. Type 1 subfamily. In terms of assembly, homotetramer.

Its subcellular location is the cytoplasm. The catalysed reaction is L-citrulline + L-aspartate + ATP = 2-(N(omega)-L-arginino)succinate + AMP + diphosphate + H(+). Its pathway is amino-acid biosynthesis; L-arginine biosynthesis; L-arginine from L-ornithine and carbamoyl phosphate: step 2/3. The protein is Argininosuccinate synthase of Buchnera aphidicola subsp. Acyrthosiphon pisum (strain 5A).